A 67-amino-acid chain; its full sequence is Large ribosomal subunit protein uL29 (67 aa).

The protein belongs to the universal ribosomal protein uL29 family.

This chain is Large ribosomal subunit protein uL29, found in Sulfurihydrogenibium sp. (strain YO3AOP1).